Consider the following 291-residue polypeptide: Malolactic fermentation system transcriptional activator (291 aa).

The HTH lysR-type domain occupies 1 to 60 (MSLNLRDLEYFYQLSKLRSFTNVAKHFRVSQPTISYAIKRLETYYDCDLFYKDSSHQVVD). Positions 20 to 39 (FTNVAKHFRVSQPTISYAIK) form a DNA-binding region, H-T-H motif.

Belongs to the LysR transcriptional regulatory family.

It is found in the cytoplasm. Its function is as follows. Required for malolactic fermentation. It is most probably a transcriptional activator. This is Malolactic fermentation system transcriptional activator (mleR) from Lactococcus lactis subsp. lactis (strain IL1403) (Streptococcus lactis).